Consider the following 85-residue polypeptide: RNA-binding protein Hfq (85 aa).

In terms of domain architecture, Sm spans 9 to 68 (DPFLNALRRERIPVSIYLVNGIKLQGQVESFDQFVILLKNTVSQMVYKHAISTVVPARPV).

It belongs to the Hfq family. As to quaternary structure, homohexamer.

Functionally, RNA chaperone that binds small regulatory RNA (sRNAs) and mRNAs to facilitate mRNA translational regulation in response to envelope stress, environmental stress and changes in metabolite concentrations. Also binds with high specificity to tRNAs. The polypeptide is RNA-binding protein Hfq (Tolumonas auensis (strain DSM 9187 / NBRC 110442 / TA 4)).